The chain runs to 42 residues: Delta-hexatoxin-Iw1a (42 aa).

Disulfide bonds link cysteine 1–cysteine 15, cysteine 8–cysteine 20, cysteine 14–cysteine 31, and cysteine 16–cysteine 42.

Belongs to the neurotoxin 06 (delta-actx) family. As to expression, expressed by the venom gland.

The protein localises to the secreted. Functionally, inhibits tetrodotoxin-sensitive sodium channels by binding to site 3. It slows the inactivation, causes a prolongation of action potential duration resulting in repetitive firing in autonomic and motor nerve fibers. Does not depolarize the resting potential. Does not affect tetrodotoxin-resistant sodium channels. This lethal neurotoxin is active on both insect and mammalian voltage-gated sodium channels (Nav). The chain is Delta-hexatoxin-Iw1a from Illawarra wisharti (Illawarra funnel-web spider).